A 118-amino-acid polypeptide reads, in one-letter code: Ribonuclease P protein component (118 aa).

This sequence belongs to the RnpA family. Consists of a catalytic RNA component (M1 or rnpB) and a protein subunit.

It carries out the reaction Endonucleolytic cleavage of RNA, removing 5'-extranucleotides from tRNA precursor.. In terms of biological role, RNaseP catalyzes the removal of the 5'-leader sequence from pre-tRNA to produce the mature 5'-terminus. It can also cleave other RNA substrates such as 4.5S RNA. The protein component plays an auxiliary but essential role in vivo by binding to the 5'-leader sequence and broadening the substrate specificity of the ribozyme. This chain is Ribonuclease P protein component, found in Petrotoga mobilis (strain DSM 10674 / SJ95).